The chain runs to 83 residues: MLEGAKSIGAGAATIASAGAAIGIGNVLSSSIHSVARNPSLAKQSFGYAILGFALTEAIASFAPMMAFLISSVIPIKESKKEG.

2 helical membrane-spanning segments follow: residues 8 to 28 (IGAG…GNVL) and 45 to 72 (SFGY…LISS).

This sequence belongs to the ATPase C chain family. In terms of assembly, F-type ATPases have 2 components, CF(1) - the catalytic core - and CF(0) - the membrane proton channel. CF(1) has five subunits: alpha(3), beta(3), gamma(1), delta(1), epsilon(1). CF(0) has three main subunits: a, b and c.

The protein localises to the mitochondrion membrane. This protein is one of the chains of the nonenzymatic membrane component (F0) of mitochondrial ATPase. The protein is ATP synthase subunit 9, mitochondrial (ATP9) of Helianthus annuus (Common sunflower).